Reading from the N-terminus, the 302-residue chain is Quinolinate synthase (302 aa).

2 residues coordinate iminosuccinate: His-24 and Ser-41. Cys-86 contacts [4Fe-4S] cluster. Iminosuccinate-binding positions include 112–114 and Ser-129; that span reads YVN. Cys-171 is a binding site for [4Fe-4S] cluster. Iminosuccinate-binding positions include 197 to 199 and Thr-214; that span reads HPE. Cys-259 contacts [4Fe-4S] cluster.

Belongs to the quinolinate synthase family. Type 2 subfamily. The cofactor is [4Fe-4S] cluster.

It is found in the cytoplasm. It carries out the reaction iminosuccinate + dihydroxyacetone phosphate = quinolinate + phosphate + 2 H2O + H(+). It functions in the pathway cofactor biosynthesis; NAD(+) biosynthesis; quinolinate from iminoaspartate: step 1/1. Functionally, catalyzes the condensation of iminoaspartate with dihydroxyacetone phosphate to form quinolinate. The chain is Quinolinate synthase from Dehalococcoides mccartyi (strain ATCC BAA-2266 / KCTC 15142 / 195) (Dehalococcoides ethenogenes (strain 195)).